We begin with the raw amino-acid sequence, 505 residues long: Monocarboxylate transporter 10 (505 aa).

Positions 1–14 (MTEPEPTLEQEPTP) are enriched in acidic residues. The tract at residues 1–64 (MTEPEPTLEQ…EQKSPEEFEP (64 aa)) is disordered. At 1-66 (MTEPEPTLEQ…KSPEEFEPPE (66 aa)) the chain is on the cytoplasmic side. The span at 15-31 (EPEPTQEPTPEPTPEPE) shows a compositional bias: pro residues. Acidic residues predominate over residues 32–41 (PTQEPESEPE). Residues 67–87 (GGWGWVVMLASMWCNGSVFGI) traverse the membrane as a helical segment. Residues 88–114 (QNAFGIMFVYLLNEFGSEHDADLRFKT) are Extracellular-facing. The chain crosses the membrane as a helical span at residues 115–135 (AWVGSLSMGMIFFCSPIVSVF). Residues 136–142 (TDLLGCR) lie on the Cytoplasmic side of the membrane. The chain crosses the membrane as a helical span at residues 143–163 (ITAVGGAAVGCVGLLASSFVT). Topologically, residues 164 to 171 (SLGPMYFT) are extracellular. The helical transmembrane segment at 172–192 (YGIVFACGCSFAYQPSLVILG) threads the bilayer. Residues 193–204 (HYFKRRLGLVNG) lie on the Cytoplasmic side of the membrane. A helical transmembrane segment spans residues 205–225 (IVTAGSSVFTITLPYMLSGLL). The Extracellular portion of the chain corresponds to 226 to 235 (KSVGLYHTLR). A helical transmembrane segment spans residues 236 to 256 (VLAIFMFILMLAGLTYKPLLP). The Cytoplasmic segment spans residues 257–286 (KPVSSSKPGSRCPPLSRIFNVNIWKSLGYR). The helical transmembrane segment at 287–307 (IWAFGIPAALYGYFVPYVHLM) threads the bilayer. At 308 to 321 (THVEERFGPEANKE) the chain is on the extracellular side. The chain crosses the membrane as a helical span at residues 322-342 (VLLACIGITSGVGRLIFGRVA). Position 343 (aspartate 343) is a topological domain, cytoplasmic. Residues 344 to 364 (YVPGVNKVFLQVSSFMVIGVM) traverse the membrane as a helical segment. The Extracellular portion of the chain corresponds to 365-377 (SMMIPLCHVFGGL). A helical transmembrane segment spans residues 378–400 (IAVCLLMGLFDGCFICIMAPIAF). Topologically, residues 401–411 (ELVGSQNVSQA) are cytoplasmic. The helical transmembrane segment at 412–432 (IGFLLGMMSIPMTVGPPIAGF) threads the bilayer. Over 433–443 (LRDRLGSYDVA) the chain is Extracellular. Residues 444 to 464 (FYLAGIPPLIGGAVLCAIPWV) form a helical membrane-spanning segment. Over 465–505 (EARRKRREAANTAENTEKMLESRSPPLEDTVCRTEEPESVI) the chain is Cytoplasmic. A disordered region spans residues 474 to 505 (ANTAENTEKMLESRSPPLEDTVCRTEEPESVI). Basic and acidic residues predominate over residues 494-505 (TVCRTEEPESVI).

It belongs to the major facilitator superfamily. Monocarboxylate porter (TC 2.A.1.13) family.

It is found in the cell membrane. The protein localises to the basolateral cell membrane. The enzyme catalyses L-tryptophan(in) = L-tryptophan(out). The catalysed reaction is L-tyrosine(in) = L-tyrosine(out). It catalyses the reaction L-phenylalanine(in) = L-phenylalanine(out). It carries out the reaction 3,3',5-triiodo-L-thyronine(out) = 3,3',5-triiodo-L-thyronine(in). The enzyme catalyses L-thyroxine(out) = L-thyroxine(in). Its function is as follows. Sodium- and proton-independent thyroid hormones and aromatic acids transporter. Mediates both uptake and efflux of 3,5,3'-triiodothyronine (T3) and 3,5,3',5'-tetraiodothyronine (T4) with high affinity, suggesting a role in the homeostasis of thyroid hormone levels. Responsible for low affinity bidirectional transport of the aromatic amino acids, such as phenylalanine, tyrosine, tryptophan and L-3,4-dihydroxyphenylalanine (L-dopa). Plays an important role in homeostasis of aromatic amino acids. This chain is Monocarboxylate transporter 10 (slc16a10), found in Danio rerio (Zebrafish).